The primary structure comprises 610 residues: UvrABC system protein C (610 aa).

Residues 16–94 form the GIY-YIG domain; that stretch reads SQPGVYRMYD…IQRYQPRYNV (79 aa). Positions 204–239 constitute a UVR domain; the sequence is SQVIEGLIKRMEEASQALRFEEAARIRDQIHAVRQV.

This sequence belongs to the UvrC family. Interacts with UvrB in an incision complex.

The protein localises to the cytoplasm. The UvrABC repair system catalyzes the recognition and processing of DNA lesions. UvrC both incises the 5' and 3' sides of the lesion. The N-terminal half is responsible for the 3' incision and the C-terminal half is responsible for the 5' incision. The chain is UvrABC system protein C from Proteus mirabilis (strain HI4320).